We begin with the raw amino-acid sequence, 170 residues long: RxLR effector protein CRE16 (170 aa).

Residues 1 to 23 (MSKLFYAFAVLAVHVLTSSPTTA) form the signal peptide. Residues 47 to 68 (RFLRSIHEGEDSLKPSAFSEER) carry the RxLR-dEER motif.

It belongs to the RxLR effector family.

It is found in the secreted. The protein resides in the host cytoplasm. Its subcellular location is the host nucleus. Its function is as follows. Effector that is involved in host plant infection. Contributes to virulence during the early infection stage, by inhibiting plant defense responses induced by both PAMP-triggered immunity (PTI) and effector-triggered immunity (ETI). The sequence is that of RxLR effector protein CRE16 from Phytophthora infestans (strain T30-4) (Potato late blight agent).